The primary structure comprises 731 residues: NADH-ubiquinone oxidoreductase 75 kDa subunit, mitochondrial (731 aa).

The transit peptide at 1-27 (MIRAPLVKALGALGSPTHQMASRAVRT) directs the protein to the mitochondrion. The 79-residue stretch at 40–118 (EKIEVFVDDI…GWRIKTNSDL (79 aa)) folds into the 2Fe-2S ferredoxin-type domain. 4 residues coordinate [2Fe-2S] cluster: Cys-74, Cys-85, Cys-88, and Cys-102. The 4Fe-4S His(Cys)3-ligated-type domain occupies 118–157 (LTRKAREGVMEFLLMNHPLDCPICDQGGECDLQDQAMAFG). [4Fe-4S] cluster contacts are provided by His-134, Cys-138, Cys-141, Cys-147, Cys-190, Cys-193, Cys-196, and Cys-240. The 4Fe-4S Mo/W bis-MGD-type domain maps to 259–315 (IRKVSSIDVLDAVGSNIVVSTRTNEVLRILPRENEDVNEEWLADKSRFACDGLKRQR).

The protein belongs to the complex I 75 kDa subunit family. As to quaternary structure, complex I is composed of about 45 different subunits. [2Fe-2S] cluster is required as a cofactor. [4Fe-4S] cluster serves as cofactor.

It is found in the mitochondrion inner membrane. It carries out the reaction a ubiquinone + NADH + 5 H(+)(in) = a ubiquinol + NAD(+) + 4 H(+)(out). In terms of biological role, core subunit of the mitochondrial membrane respiratory chain NADH dehydrogenase (Complex I) that is believed to belong to the minimal assembly required for catalysis. Complex I functions in the transfer of electrons from NADH to the respiratory chain. The immediate electron acceptor for the enzyme is believed to be ubiquinone. This is the largest subunit of complex I and it is a component of the iron-sulfur (IP) fragment of the enzyme. It may form part of the active site crevice where NADH is oxidized. The sequence is that of NADH-ubiquinone oxidoreductase 75 kDa subunit, mitochondrial from Drosophila melanogaster (Fruit fly).